The following is a 681-amino-acid chain: RNA polymerase sigma factor RpoD (681 aa).

Disordered stretches follow at residues 1-60 (MKKK…ETAK) and 239-270 (DDDE…VSEK). Basic and acidic residues predominate over residues 261–270 (EERKKVVSEK). Residues 446 to 516 (MAKSNLRLVV…SRAIADQART (71 aa)) are sigma-70 factor domain-2. The Interaction with polymerase core subunit RpoC signature appears at 470–473 (DLIQ). Positions 525 to 601 (DTINRINKVM…DKNIVSSIDH (77 aa)) are sigma-70 factor domain-3. Residues 614–668 (VLDQLNEREKAVIRMRFGLLDDESDRTLEEIGKELNVTRERVRQIESSAIKKLRS) form a sigma-70 factor domain-4 region. A DNA-binding region (H-T-H motif) is located at residues 641–660 (LEEIGKELNVTRERVRQIES).

It belongs to the sigma-70 factor family. RpoD/SigA subfamily. In terms of assembly, interacts transiently with the RNA polymerase catalytic core.

The protein resides in the cytoplasm. Sigma factors are initiation factors that promote the attachment of RNA polymerase to specific initiation sites and are then released. This sigma factor is the primary sigma factor during exponential growth. The polypeptide is RNA polymerase sigma factor RpoD (Helicobacter pylori (strain J99 / ATCC 700824) (Campylobacter pylori J99)).